A 917-amino-acid chain; its full sequence is Protein translocase subunit SecA (917 aa).

ATP-binding positions include Q87, 105–109 (GEGKT), and D516. 4 residues coordinate Zn(2+): C901, C903, C912, and H913.

The protein belongs to the SecA family. As to quaternary structure, monomer and homodimer. Part of the essential Sec protein translocation apparatus which comprises SecA, SecYEG and auxiliary proteins SecDF-YajC and YidC. Zn(2+) is required as a cofactor.

It localises to the cell inner membrane. Its subcellular location is the cytoplasm. It catalyses the reaction ATP + H2O + cellular proteinSide 1 = ADP + phosphate + cellular proteinSide 2.. In terms of biological role, part of the Sec protein translocase complex. Interacts with the SecYEG preprotein conducting channel. Has a central role in coupling the hydrolysis of ATP to the transfer of proteins into and across the cell membrane, serving both as a receptor for the preprotein-SecB complex and as an ATP-driven molecular motor driving the stepwise translocation of polypeptide chains across the membrane. The chain is Protein translocase subunit SecA from Verminephrobacter eiseniae (strain EF01-2).